The chain runs to 184 residues: Probable archaeosortase E (184 aa).

The next 4 helical transmembrane spans lie at 27–47 (ILFL…LSYF), 86–106 (VVEE…IIVY), 114–134 (IIGI…IVLI), and 151–171 (IAGY…YLKI). Catalysis depends on Cys90, which acts as the Acyl-thioester intermediate. The active-site Proton donor is Arg130.

The protein belongs to the exosortase/archaeosortase family. Archaeosortase E subfamily.

The protein localises to the cell membrane. In terms of biological role, transpeptidase that recognizes and modifies its substrate by proteolytic cleavage of a sorting signal. Following cleavage, a covalent intermediate is formed via a thioester bond between the archaeosortase and its substrate, which is then transferred and covalently attached to the cell membrane. In Methanocaldococcus jannaschii (strain ATCC 43067 / DSM 2661 / JAL-1 / JCM 10045 / NBRC 100440) (Methanococcus jannaschii), this protein is Probable archaeosortase E.